The sequence spans 106 residues: Protein yippee-like At4g27745 (106 aa).

The region spanning 8-105 is the Yippee domain; sequence RLYSCCNCRN…FEKAKIVKED (98 aa). Zn(2+) contacts are provided by Cys12, Cys15, Cys68, and Cys71.

Belongs to the yippee family.

In Arabidopsis thaliana (Mouse-ear cress), this protein is Protein yippee-like At4g27745.